The following is a 343-amino-acid chain: UPF0324 membrane protein LJ_1117 (343 aa).

A run of 10 helical transmembrane segments spans residues phenylalanine 10–leucine 27, tyrosine 32–valine 54, isoleucine 64–threonine 86, alanine 91–leucine 113, leucine 123–glutamine 145, asparagine 157–isoleucine 179, alanine 219–tyrosine 241, isoleucine 262–valine 284, glycine 288–phenylalanine 310, and glycine 317–serine 339.

Belongs to the UPF0324 family.

The protein resides in the cell membrane. This Lactobacillus johnsonii (strain CNCM I-12250 / La1 / NCC 533) protein is UPF0324 membrane protein LJ_1117.